The chain runs to 431 residues: Adenylosuccinate synthetase (431 aa).

GTP is bound by residues 13-19 (GDEGKGK) and 41-43 (GHT). Asp14 serves as the catalytic Proton acceptor. Asp14 and Gly41 together coordinate Mg(2+). IMP is bound by residues 14–17 (DEGK), 39–42 (NAGH), Thr130, Arg144, Gln225, Thr240, and Arg304. The active-site Proton donor is His42. 300 to 306 (ATTGRKR) serves as a coordination point for substrate. Residues Arg306, 332–334 (KLD), and 415–417 (STG) contribute to the GTP site.

Belongs to the adenylosuccinate synthetase family. Homodimer. The cofactor is Mg(2+).

The protein localises to the cytoplasm. It carries out the reaction IMP + L-aspartate + GTP = N(6)-(1,2-dicarboxyethyl)-AMP + GDP + phosphate + 2 H(+). It participates in purine metabolism; AMP biosynthesis via de novo pathway; AMP from IMP: step 1/2. Plays an important role in the de novo pathway of purine nucleotide biosynthesis. Catalyzes the first committed step in the biosynthesis of AMP from IMP. The chain is Adenylosuccinate synthetase from Shewanella amazonensis (strain ATCC BAA-1098 / SB2B).